An 853-amino-acid polypeptide reads, in one-letter code: DNA mismatch repair protein MutS (853 aa).

Residue 613 to 620 (GPNMGGKS) participates in ATP binding.

The protein belongs to the DNA mismatch repair MutS family.

Functionally, this protein is involved in the repair of mismatches in DNA. It is possible that it carries out the mismatch recognition step. This protein has a weak ATPase activity. In Vibrio vulnificus (strain YJ016), this protein is DNA mismatch repair protein MutS.